A 655-amino-acid chain; its full sequence is Chaperone protein DnaK 3 (655 aa).

Threonine 197 bears the Phosphothreonine; by autocatalysis mark.

This sequence belongs to the heat shock protein 70 family.

In terms of biological role, acts as a chaperone. The protein is Chaperone protein DnaK 3 of Synechococcus sp. (strain ATCC 27144 / PCC 6301 / SAUG 1402/1) (Anacystis nidulans).